Reading from the N-terminus, the 911-residue chain is General transcription factor 3C polypeptide 2 (911 aa).

2 disordered regions span residues 34–187 (LDVK…RRRA) and 205–297 (ALPA…MAPN). The span at 35–46 (DVKTSSEMTSAE) shows a compositional bias: polar residues. Residue S63 is modified to Phosphoserine. Basic and acidic residues predominate over residues 64-81 (PDQRRLPPEQESLSRLEQ). A compositionally biased stretch (basic residues) spans 92–112 (SKPRASKPGRKRGGRTRKGPK). Residues 114–123 (PQQPNPPSAP) show a composition bias toward pro residues. A phosphoserine mark is found at S132, S165, S167, S220, and S260. The segment covering 253–262 (EAEDVEESEG) has biased composition (acidic residues). The segment covering 263-275 (PSESSSEPEPAVP) has biased composition (low complexity). WD repeat units lie at residues 465–521 (CDNG…ALLA) and 552–593 (SECG…PLQR). S597 carries the post-translational modification Phosphoserine. Residues 611–651 (AHDQAVRTLQWCKANSHFLASAGSDRKIKFWDLRRPYEPIN) form a WD 3 repeat. The segment at 765–785 (SPEGPDHSSASSGVPNPPKAR) is disordered. The stretch at 832 to 874 (LQLEAIHKVRFSPNLDSYGWLVSGGQSGLVRIHFVRGLASPLG) is one WD 4 repeat. Residues S871, S892, and S893 each carry the phosphoserine modification. The disordered stretch occupies residues 889–911 (FQPSSPTRRPGFSPTSHRLLPTP). T895 is modified (phosphothreonine). Position 901 is a phosphoserine (S901).

As to quaternary structure, part of the TFIIIC subcomplex TFIIIC2, consisting of six subunits, GTF3C1, GTF3C2, GTF3C3, GTF3C4, GTF3C5 and GTF3C6.

It is found in the nucleus. Required for RNA polymerase III-mediated transcription. Component of TFIIIC that initiates transcription complex assembly on tRNA and is required for transcription of 5S rRNA and other stable nuclear and cytoplasmic RNAs. May play a direct role in stabilizing interactions of TFIIIC2 with TFIIIC1. The protein is General transcription factor 3C polypeptide 2 (GTF3C2) of Pongo abelii (Sumatran orangutan).